The primary structure comprises 51 residues: uncharacterized protein (51 aa).

Residues Met1–Gln28 form a disordered region. Positions Ser13 to Gln47 form a coiled coil.

This is an uncharacterized protein from Dictyostelium discoideum (Social amoeba).